A 388-amino-acid polypeptide reads, in one-letter code: Chalcone synthase LF3 (388 aa).

Cys-164 is a catalytic residue.

The protein belongs to the thiolase-like superfamily. Chalcone/stilbene synthases family.

The enzyme catalyses (E)-4-coumaroyl-CoA + 3 malonyl-CoA + 3 H(+) = 2',4,4',6'-tetrahydroxychalcone + 3 CO2 + 4 CoA. It participates in secondary metabolite biosynthesis; flavonoid biosynthesis. Functionally, the primary product of this enzyme is 4,2',4',6'-tetrahydroxychalcone (also termed naringenin-chalcone or chalcone) which can under specific conditions spontaneously isomerize into naringenin. This chain is Chalcone synthase LF3 (CHS-LF3), found in Ipomoea batatas (Sweet potato).